A 333-amino-acid polypeptide reads, in one-letter code: Mitochondrial fission regulator 1 (333 aa).

Ser119 carries the post-translational modification Phosphoserine. Over residues 286 to 307 the composition is skewed to basic and acidic residues; sequence YRSDSQDEVEKGVPKSESEATS. A disordered region spans residues 286–315; sequence YRSDSQDEVEKGVPKSESEATSERVLFGPH.

This sequence belongs to the MTFR1 family.

It localises to the mitochondrion. In terms of biological role, may play a role in mitochondrial aerobic respiration. May also regulate mitochondrial organization and fission. In Pongo abelii (Sumatran orangutan), this protein is Mitochondrial fission regulator 1 (MTFR1).